The following is a 455-amino-acid chain: Ammonium transporter Rh type B (455 aa).

The Cytoplasmic segment spans residues 1–10; sequence MARIPRHRRL. The chain crosses the membrane as a helical span at residues 11–31; sequence VLPLLCLLFQGATSLLFAIFV. The Extracellular portion of the chain corresponds to 32-58; the sequence is RYNHETDAALWHWGNHSNVDNEFYFRY. Residue Asn46 is glycosylated (N-linked (GlcNAc...) asparagine). Residues 59–79 traverse the membrane as a helical segment; sequence PSFQDVHVMVFVGFGFLMVFL. At 80 to 83 the chain is on the cytoplasmic side; sequence QRYG. A helical transmembrane segment spans residues 84 to 104; sequence FSSVGFTFLVATFTLQWATLL. Over 105–121 the chain is Extracellular; the sequence is QGFLHSFHGGHIHIGVE. A helical transmembrane segment spans residues 122–142; the sequence is SLINADFCAGAVLISFGAVLG. Residues 143–148 are Cytoplasmic-facing; it reads KTGPAQ. A helical membrane pass occupies residues 149–169; the sequence is LLLMALLEAVLFSVNEFILLS. Residues 170–176 lie on the Extracellular side of the membrane; sequence LLGVRDA. Residues 177 to 197 traverse the membrane as a helical segment; that stretch reads GGSMTIHTFGAYFGLFLSRVL. The Cytoplasmic segment spans residues 198 to 216; it reads YRSQLEKSRHRQTSVYNSD. A helical membrane pass occupies residues 217–237; the sequence is LFAMIGTIFLWVFWPSFNSAP. The Extracellular portion of the chain corresponds to 238–247; that stretch reads TALGDGQHRT. The helical transmembrane segment at 248–270 threads the bilayer; that stretch reads VVNTYYSLTASTLSTFALSALVS. At 271-274 the chain is on the cytoplasmic side; sequence GDGR. The chain crosses the membrane as a helical span at residues 275-295; sequence LDMVHIQNAALAGGVVVGTAS. Residue Glu296 is a topological domain, extracellular. The helical transmembrane segment at 297-317 threads the bilayer; it reads MMLTPFGALAAGFLAGTVSTL. The Cytoplasmic segment spans residues 318-340; the sequence is GYKFFTPILESRFKLQDTCGVHN. Residues 341–361 traverse the membrane as a helical segment; that stretch reads LHGMPGLLGAILGVLVAALAT. Residues 362 to 390 are Extracellular-facing; the sequence is HEAYGDGLQTVFPLIAKGQRSATSQAMYQ. Residues 391–411 traverse the membrane as a helical segment; sequence LFGMFVTLVFASVGGSLGGLL. The Cytoplasmic segment spans residues 412-455; sequence LKLPFLDSPPDSQCFEDQVYWEVPGEQEAETQRPLRTEEPDTQA. Residues 413–421 form an interaction with ANK3 region; it reads KLPFLDSPP.

The protein belongs to the ammonium transporter (TC 2.A.49) family. Rh subfamily. Interacts (via C-terminus) with ANK2 and ANK3; required for targeting to the basolateral membrane. Post-translationally, N-glycosylated. As to expression, expressed in kidney by connecting segments and collecting tubules (at protein level).

It is found in the basolateral cell membrane. The protein localises to the cytoplasmic vesicle membrane. The enzyme catalyses NH4(+)(in) = NH4(+)(out). The catalysed reaction is methylamine(out) = methylamine(in). It carries out the reaction CO2(out) = CO2(in). Ammonium transporter involved in the maintenance of acid-base homeostasis. Transports ammonium and its related derivative methylammonium across the basolateral plasma membrane of epithelial cells likely contributing to renal transepithelial ammonia transport and ammonia metabolism. May transport either NH4(+) or NH3 ammonia species predominantly mediating an electrogenic NH4(+) transport. May act as a CO2 channel providing for renal acid secretion. This is Ammonium transporter Rh type B (Rhbg) from Rattus norvegicus (Rat).